The following is a 134-amino-acid chain: Fatty acid-binding protein 5 (134 aa).

The Nuclear localization signal motif lies at 23 to 33 (KELGVGMAMRK). Hexadecanoate-binding positions include R109 and 129 to 131 (RVY). R109 and Y131 together coordinate N-eicosanoyl ethanolamine. 129–131 (RVY) serves as a coordination point for (9Z,12Z)-octadecadienoate.

It belongs to the calycin superfamily. Fatty-acid binding protein (FABP) family. In terms of assembly, monomer.

It localises to the cytoplasm. It is found in the nucleus. The protein resides in the synapse. The protein localises to the postsynaptic density. Its subcellular location is the secreted. The catalysed reaction is hexadecanoate(out) = hexadecanoate(in). It catalyses the reaction (9Z,12Z)-octadecadienoate(out) = (9Z,12Z)-octadecadienoate(in). It carries out the reaction (9Z)-octadecenoate(out) = (9Z)-octadecenoate(in). In terms of biological role, intracellular carrier for long-chain fatty acids and related active lipids, such as endocannabinoids, that regulate the metabolism and actions of the ligands they bind. In addition to the cytosolic transport, selectively delivers specific fatty acids from the cytosol to the nucleus, wherein they activate nuclear receptors. Delivers retinoic acid to the nuclear receptor peroxisome proliferator-activated receptor delta; which promotes proliferation and survival. May also serve as a synaptic carrier of endocannabinoid at central synapses and thus controls retrograde endocannabinoid signaling. Modulates inflammation by regulating PTGES induction via NF-kappa-B activation, and prostaglandin E2 (PGE2) biosynthesis during inflammation. Has the highest binding affinity for docosahexaenoic acid (DHA) and decreasing relative affinity for eicosapentaenoic acid (EPA), alpha-linolenic acid (ALA), oleic acid, palmitic acid, linoleic acid and stearic acid, respectively. The chain is Fatty acid-binding protein 5 from Pygoscelis papua (Gentoo penguin).